A 159-amino-acid polypeptide reads, in one-letter code: MNIKIVCVGKLKEKYFKDAIAEYQKRLSRFAKVTIVQVPDEKAPEKFSEAEDEKVKEIEGQRILSKIKDKEYVYVTAIKGKQRSSEEFAKEIQDLGTYGHSDITFVIGGSLGTSDAVNKRADDLISFGKLTMPHQLMRVVLIEQIYRAFMINSGSPYHK.

Residues glycine 108 and 127 to 132 (FGKLTM) each bind S-adenosyl-L-methionine.

The protein belongs to the RNA methyltransferase RlmH family. As to quaternary structure, homodimer.

It is found in the cytoplasm. The catalysed reaction is pseudouridine(1915) in 23S rRNA + S-adenosyl-L-methionine = N(3)-methylpseudouridine(1915) in 23S rRNA + S-adenosyl-L-homocysteine + H(+). In terms of biological role, specifically methylates the pseudouridine at position 1915 (m3Psi1915) in 23S rRNA. This chain is Ribosomal RNA large subunit methyltransferase H, found in Lactobacillus acidophilus (strain ATCC 700396 / NCK56 / N2 / NCFM).